The following is a 345-amino-acid chain: Heat-inducible transcription repressor HrcA (345 aa).

The protein belongs to the HrcA family.

Negative regulator of class I heat shock genes (grpE-dnaK-dnaJ and groELS operons). Prevents heat-shock induction of these operons. The polypeptide is Heat-inducible transcription repressor HrcA (Dehalococcoides mccartyi (strain ATCC BAA-2266 / KCTC 15142 / 195) (Dehalococcoides ethenogenes (strain 195))).